The following is a 764-amino-acid chain: Reticulon-1 (764 aa).

Disordered regions lie at residues 1-37 (MAAN…GGAL), 115-147 (PDIK…SGIE), 247-400 (LYNS…SEIE), and 455-475 (ESCD…DSPM). Over residues 261–282 (VTISFTGMETTLQTEYPENQQG) the composition is skewed to polar residues. A compositionally biased stretch (basic and acidic residues) spans 328–337 (EEQRKYKISE). Residues 578 to 764 (AIELLYWRDI…AKIPGTKQKE (187 aa)) enclose the Reticulon domain. 2 helical membrane passes run 607 to 627 (FSVV…TISF) and 696 to 716 (VLMW…LLIM).

The protein resides in the endoplasmic reticulum membrane. The protein localises to the nucleus. Inhibits amyloid precursor protein processing, probably by blocking BACE1 activity. The sequence is that of Reticulon-1 from Xenopus tropicalis (Western clawed frog).